A 463-amino-acid chain; its full sequence is Fumarate hydratase class II (463 aa).

Residues 98-100 (SGT), 129-132 (HPND), 139-141 (SSN), and Thr-187 each bind substrate. The Proton donor/acceptor role is filled by His-188. Ser-318 is a catalytic residue. Residues Ser-319 and 324-326 (KVN) each bind substrate.

This sequence belongs to the class-II fumarase/aspartase family. Fumarase subfamily. Homotetramer.

The protein resides in the cytoplasm. It catalyses the reaction (S)-malate = fumarate + H2O. The protein operates within carbohydrate metabolism; tricarboxylic acid cycle; (S)-malate from fumarate: step 1/1. Functionally, involved in the TCA cycle. Catalyzes the stereospecific interconversion of fumarate to L-malate. The protein is Fumarate hydratase class II of Rhizobium meliloti (strain 1021) (Ensifer meliloti).